The chain runs to 142 residues: Small ribosomal subunit protein uS12 (142 aa).

The interval Met-1–Pro-22 is disordered. Residues Arg-9 to Ser-19 are compositionally biased toward basic residues. Asp-102 carries the post-translational modification 3-methylthioaspartic acid.

The protein belongs to the universal ribosomal protein uS12 family. Part of the 30S ribosomal subunit. Contacts proteins S8 and S17. May interact with IF1 in the 30S initiation complex.

In terms of biological role, with S4 and S5 plays an important role in translational accuracy. Interacts with and stabilizes bases of the 16S rRNA that are involved in tRNA selection in the A site and with the mRNA backbone. Located at the interface of the 30S and 50S subunits, it traverses the body of the 30S subunit contacting proteins on the other side and probably holding the rRNA structure together. The combined cluster of proteins S8, S12 and S17 appears to hold together the shoulder and platform of the 30S subunit. This chain is Small ribosomal subunit protein uS12, found in Acetivibrio thermocellus (strain ATCC 27405 / DSM 1237 / JCM 9322 / NBRC 103400 / NCIMB 10682 / NRRL B-4536 / VPI 7372) (Clostridium thermocellum).